Reading from the N-terminus, the 488-residue chain is Ribulose bisphosphate carboxylase large chain (488 aa).

Substrate contacts are provided by Asn-128 and Thr-178. Lys-180 (proton acceptor) is an active-site residue. Lys-182 lines the substrate pocket. Residues Lys-206, Asp-208, and Glu-209 each contribute to the Mg(2+) site. N6-carboxylysine is present on Lys-206. The active-site Proton acceptor is the His-298. Residues Arg-299, His-331, and Ser-383 each coordinate substrate.

Belongs to the RuBisCO large chain family. Type I subfamily. As to quaternary structure, heterohexadecamer of 8 large chains and 8 small chains. Mg(2+) is required as a cofactor.

The enzyme catalyses 2 (2R)-3-phosphoglycerate + 2 H(+) = D-ribulose 1,5-bisphosphate + CO2 + H2O. The catalysed reaction is D-ribulose 1,5-bisphosphate + O2 = 2-phosphoglycolate + (2R)-3-phosphoglycerate + 2 H(+). RuBisCO catalyzes two reactions: the carboxylation of D-ribulose 1,5-bisphosphate, the primary event in carbon dioxide fixation, as well as the oxidative fragmentation of the pentose substrate. Both reactions occur simultaneously and in competition at the same active site. The polypeptide is Ribulose bisphosphate carboxylase large chain (Xanthobacter autotrophicus (strain ATCC BAA-1158 / Py2)).